The primary structure comprises 350 residues: MSASPSPSTRADALALARWLFVVAFMVVAIVAVGGITRLTESGVSITEWKPVAGTLPPITDAQWQAEFDAYRQTPQFQLVNGPAGMTLATYKFIFFWEWVHRLLARTIGLVFAAPLAWFWIKRRIPEGYKPRLVALLALGALQGAVGWWMVKSGIVNDVKVSHFRLATHLLVALFTLGGLVWTALDLVALSKGEARSRLRGIGLLALAMLVLQLFYGALVAGLRAGTSAGGGWFNWDAWPLMQGSLYPDGVDWATGAVHALLSDVFLVHFIHRWWAWAVVAVLVVVARKLRKTNRKASIVLHSVFGTQVLLGIFTVWSGVALWIAVLHQFVGALLVAATTWSAHLLGARR.

The next 8 helical transmembrane spans lie at 16–36 (LARW…VGGI), 77–97 (FQLV…IFFW), 101–121 (HRLL…WFWI), 136–156 (LLAL…SGIV), 170–190 (LLVA…LVAL), 201–221 (GIGL…ALVA), 265–285 (VFLV…VLVV), and 299–321 (IVLH…SGVA). H272 is a binding site for heme. A heme-binding site is contributed by H328.

The protein belongs to the COX15/CtaA family. Type 2 subfamily. As to quaternary structure, interacts with CtaB. Heme b serves as cofactor.

It localises to the cell membrane. It catalyses the reaction Fe(II)-heme o + 2 A + H2O = Fe(II)-heme a + 2 AH2. Its pathway is porphyrin-containing compound metabolism; heme A biosynthesis; heme A from heme O: step 1/1. In terms of biological role, catalyzes the conversion of heme O to heme A by two successive hydroxylations of the methyl group at C8. The first hydroxylation forms heme I, the second hydroxylation results in an unstable dihydroxymethyl group, which spontaneously dehydrates, resulting in the formyl group of heme A. The protein is Heme A synthase of Novosphingobium aromaticivorans (strain ATCC 700278 / DSM 12444 / CCUG 56034 / CIP 105152 / NBRC 16084 / F199).